We begin with the raw amino-acid sequence, 552 residues long: T-box transcription factor TBX4 (552 aa).

A compositionally biased stretch (basic and acidic residues) spans 1 to 14; that stretch reads MLQDKGLSESEEAF. The disordered stretch occupies residues 1-50; it reads MLQDKGLSESEEAFRAPGPALGEASNTSTTNAPEPALATPGLSGAALSSP. The segment at residues 76 to 256 is a DNA-binding region (T-box); the sequence is LHEKELWKKF…NNPFAKGFRG (181 aa). Phosphoserine is present on S514.

It localises to the nucleus. In terms of biological role, transcriptional regulator that has an essential role in the organogenesis of lungs, pelvis, and hindlimbs. This Mus musculus (Mouse) protein is T-box transcription factor TBX4 (Tbx4).